The sequence spans 473 residues: 1-deoxy-D-xylulose 5-phosphate reductoisomerase, chloroplastic (473 aa).

A chloroplast-targeting transit peptide spans 1-49 (MALKVVSFPGDLAAVSFLDSNRGGAFNQLKVDLPFQTRDRRAVSLRRTC). Residues threonine 85, glycine 86, serine 87, isoleucine 88, glycine 111, asparagine 113, and asparagine 199 each coordinate NADPH. Position 200 (lysine 200) interacts with 1-deoxy-D-xylulose 5-phosphate. Glutamate 201 is a binding site for NADPH. Aspartate 225 lines the Mn(2+) pocket. The 1-deoxy-D-xylulose 5-phosphate site is built by serine 226, glutamate 227, serine 251, and histidine 274. Glutamate 227 is a Mn(2+) binding site. Glycine 280 is an NADPH binding site. Residues serine 287, asparagine 292, lysine 293, and glutamate 296 each coordinate 1-deoxy-D-xylulose 5-phosphate. Glutamate 296 lines the Mn(2+) pocket.

Belongs to the DXR family. The cofactor is Mn(2+). Requires Mg(2+) as cofactor.

It is found in the plastid. It localises to the chloroplast stroma. The enzyme catalyses 2-C-methyl-D-erythritol 4-phosphate + NADP(+) = 1-deoxy-D-xylulose 5-phosphate + NADPH + H(+). The protein operates within isoprenoid biosynthesis; isopentenyl diphosphate biosynthesis via DXP pathway; isopentenyl diphosphate from 1-deoxy-D-xylulose 5-phosphate: step 1/6. Its function is as follows. Enzyme of the plastid non-mevalonate pathway for isoprenoid biosynthesis that catalyzes the NADPH-dependent rearrangement and reduction of 1-deoxy-D-xylulose-5-phosphate (DXP) to 2-C-methyl-D-erythritol 4-phosphate (MEP). Required for chloroplast development. This Oryza sativa subsp. japonica (Rice) protein is 1-deoxy-D-xylulose 5-phosphate reductoisomerase, chloroplastic (DXR).